The following is a 418-amino-acid chain: Putative competence-damage inducible protein (418 aa).

The protein belongs to the CinA family.

This Streptococcus pneumoniae (strain CGSP14) protein is Putative competence-damage inducible protein.